Reading from the N-terminus, the 100-residue chain is Urease subunit gamma (100 aa).

It belongs to the urease gamma subunit family. As to quaternary structure, heterotrimer of UreA (gamma), UreB (beta) and UreC (alpha) subunits. Three heterotrimers associate to form the active enzyme.

It is found in the cytoplasm. The enzyme catalyses urea + 2 H2O + H(+) = hydrogencarbonate + 2 NH4(+). Its pathway is nitrogen metabolism; urea degradation; CO(2) and NH(3) from urea (urease route): step 1/1. The sequence is that of Urease subunit gamma from Klebsiella pneumoniae.